The following is a 187-amino-acid chain: UPF0340 protein SMU_87 (187 aa).

Belongs to the UPF0340 family.

The chain is UPF0340 protein SMU_87 from Streptococcus mutans serotype c (strain ATCC 700610 / UA159).